A 385-amino-acid chain; its full sequence is MLVSARVEKQKRVAYQGKATVLALGKALPSNVVSQENLVEEYLREIKCDNLSIKDKLQHLCKSTTVKTRYTVMSRETLHKYPELATEGSPTIKQRLEIANDAVVQMAYEASLVCIKEWGRAVEDITHLVYVSSSEFRLPGGDLYLSAQLGLSNEVQRVMLYFLGCYGGLSGLRVAKDIAENNPGSRVLLTTSETTVLGFRPPNKARPYNLVGAALFGDGAAALIIGADPTESESPFMELHCAMQQFLPQTQGVIDGRLSEEGITFKLGRDLPQKIEDNVEEFCKKLVAKAGSGALELNDLFWAVHPGGPAILSGLETKLKLKPEKLECSRRALMDYGNVSSNTIFYIMDKVRDELEKKGTEGEEWGLGLAFGPGITFEGFLMRNL.

CoA is bound at residue 56–63 (KLQHLCKS). Cys165 (nucleophile) is an active-site residue. 217 to 218 (GD) serves as a coordination point for substrate. CoA contacts are provided by residues Leu267, 307–310 (GGPA), and Ala310.

The protein belongs to the thiolase-like superfamily. Chalcone/stilbene synthases family. As to quaternary structure, homodimer.

It is found in the endoplasmic reticulum. It functions in the pathway secondary metabolite biosynthesis; flavonoid biosynthesis. Its function is as follows. Plant type III polyketide synthases (PKSs) that catalyzes the condensation of malonyl-CoA units with various CoA ester starter molecules to generate a diverse array of natural products including long-chain alkyl alpha-pyrones. The sequence is that of Type III polyketide synthase C from Arabidopsis thaliana (Mouse-ear cress).